Reading from the N-terminus, the 389-residue chain is 3-oxo-Delta(4,5)-steroid 5-beta-reductase (389 aa).

Residues 35–37 (TGI), 63–64 (RR), 81–82 (DI), threonine 105, and glutamine 143 each bind NADP(+). Residues lysine 147 and tyrosine 179 contribute to the active site. NADP(+)-binding positions include tyrosine 179, isoleucine 206, and 213–215 (SMM).

This sequence belongs to the short-chain dehydrogenases/reductases (SDR) family. Highly divergent. As to quaternary structure, homodimer.

It carries out the reaction 5beta-cholestan-3-one + NADP(+) = cholest-4-en-3-one + NADPH + H(+). The enzyme catalyses 4,5beta-dihydrocortisone + NADP(+) = cortisone + NADPH + H(+). Its function is as follows. Involved in cardenolide biosynthesis. Catalyzes the stereospecific conversion of progesterone to 5-beta-pregnane-3,20-dione. Can use progesterone, testosterone, 4-androstene-3,17-dione, cortisol and cortisone as substrates, but not pregnenolone, 21-OH-pregnenolone or isoprogesterone. NADPH could not be replaced by NADH. This is 3-oxo-Delta(4,5)-steroid 5-beta-reductase from Digitalis lanata (Grecian foxglove).